Consider the following 261-residue polypeptide: Cytochrome c oxidase subunit 3 (261 aa).

At 1 to 15 (MTHQTHAYHMVNPSP) the chain is on the mitochondrial matrix side. A helical membrane pass occupies residues 16 to 34 (WPLTGALSALLMTSGLIMW). The Mitochondrial intermembrane segment spans residues 35-40 (FHFNST). The chain crosses the membrane as a helical span at residues 41-66 (TLLMLGLTTNMLTMYQWWRDVVREST). Topologically, residues 67–72 (FQGHHT) are mitochondrial matrix. A helical transmembrane segment spans residues 73–105 (PNVQKGLRYGMILFIISEVLFFTGFFWAFYHSS). The Mitochondrial intermembrane portion of the chain corresponds to 106-128 (LAPTPELGGCWPPTGIHPLNPLE). A helical membrane pass occupies residues 129 to 152 (VPLLNTSVLLASGVSITWAHHSLM). At 153 to 155 (EGN) the chain is on the mitochondrial matrix side. A helical membrane pass occupies residues 156-183 (RNHMLQALFITIALGVYFTLLQASEYYE). Over 184–190 (APFTISD) the chain is Mitochondrial intermembrane. Residues 191-223 (GVYGSTFFVATGFHGLHVIIGSTFLIVCFFRQL) traverse the membrane as a helical segment. Residues 224–232 (KFHFTSSHH) are Mitochondrial matrix-facing. A helical transmembrane segment spans residues 233-256 (FGFEAAAWYWHFVDVVWLFLYVSI). The Mitochondrial intermembrane segment spans residues 257 to 261 (YWWGS).

It belongs to the cytochrome c oxidase subunit 3 family. Component of the cytochrome c oxidase (complex IV, CIV), a multisubunit enzyme composed of 14 subunits. The complex is composed of a catalytic core of 3 subunits MT-CO1, MT-CO2 and MT-CO3, encoded in the mitochondrial DNA, and 11 supernumerary subunits COX4I, COX5A, COX5B, COX6A, COX6B, COX6C, COX7A, COX7B, COX7C, COX8 and NDUFA4, which are encoded in the nuclear genome. The complex exists as a monomer or a dimer and forms supercomplexes (SCs) in the inner mitochondrial membrane with NADH-ubiquinone oxidoreductase (complex I, CI) and ubiquinol-cytochrome c oxidoreductase (cytochrome b-c1 complex, complex III, CIII), resulting in different assemblies (supercomplex SCI(1)III(2)IV(1) and megacomplex MCI(2)III(2)IV(2)).

It localises to the mitochondrion inner membrane. It carries out the reaction 4 Fe(II)-[cytochrome c] + O2 + 8 H(+)(in) = 4 Fe(III)-[cytochrome c] + 2 H2O + 4 H(+)(out). In terms of biological role, component of the cytochrome c oxidase, the last enzyme in the mitochondrial electron transport chain which drives oxidative phosphorylation. The respiratory chain contains 3 multisubunit complexes succinate dehydrogenase (complex II, CII), ubiquinol-cytochrome c oxidoreductase (cytochrome b-c1 complex, complex III, CIII) and cytochrome c oxidase (complex IV, CIV), that cooperate to transfer electrons derived from NADH and succinate to molecular oxygen, creating an electrochemical gradient over the inner membrane that drives transmembrane transport and the ATP synthase. Cytochrome c oxidase is the component of the respiratory chain that catalyzes the reduction of oxygen to water. Electrons originating from reduced cytochrome c in the intermembrane space (IMS) are transferred via the dinuclear copper A center (CU(A)) of subunit 2 and heme A of subunit 1 to the active site in subunit 1, a binuclear center (BNC) formed by heme A3 and copper B (CU(B)). The BNC reduces molecular oxygen to 2 water molecules using 4 electrons from cytochrome c in the IMS and 4 protons from the mitochondrial matrix. This Gazella spekei (Speke's gazelle) protein is Cytochrome c oxidase subunit 3 (MT-CO3).